The following is a 977-amino-acid chain: Serine/threonine-protein kinase/endoribonuclease IRE1 (977 aa).

An N-terminal signal peptide occupies residues 1-20 (MPARWLLLLLALLLPPPGPG). Topologically, residues 21–445 (SFGRTSTVTL…EAPVDSMLKD (425 aa)) are lumenal. N-linked (GlcNAc...) asparagine glycosylation occurs at Asn-178. The helical transmembrane segment at 446–466 (MATIILSTFLLVGWVAFIITY) threads the bilayer. The Cytoplasmic segment spans residues 467–977 (PLSVHQQRQL…PQPPVIPYAL (511 aa)). The disordered stretch occupies residues 498–559 (FHPHGDLTQD…PSLEQDDEDE (62 aa)). The segment covering 513-551 (SSGPFSESSGTSSPSPSPRASNHSLHPSSSASRAGTSPS) has biased composition (low complexity). The Protein kinase domain maps to 571-832 (FCPKDVLGHG…AKHVLKHPFF (262 aa)). ATP-binding positions include 577 to 585 (LGHGAEGTI), Lys-599, and 643 to 645 (ELC). Asp-688 functions as the Proton acceptor; for protein kinase activity in the catalytic mechanism. ATP-binding positions include 690–693 (KPHN) and Asp-711. A phosphoserine mark is found at Ser-724 and Ser-729. In terms of domain architecture, KEN spans 835-963 (LEKQLQFFQD…ERLFQTYYWH (129 aa)). Residues 906 to 907 (NK) are interacts with hydroxy-aryl-aldehyde inhibitors.

Belongs to the protein kinase superfamily. Ser/Thr protein kinase family. Monomer. Homodimer; disulfide-linked; homodimerization takes place in response to endoplasmic reticulum stress and promotes activation of the kinase and endoribonuclease activities. Dimer formation is driven by hydrophobic interactions within the N-terminal luminal domains and stabilized by disulfide bridges. Interacts (via the luminal region) with DNAJB9/ERdj4; interaction takes place in unstressed cells and promotes recruitment of HSPA5/BiP. Interacts (via the luminal region) with HSPA5/BiP; HSPA5/BiP is a negative regulator of the unfolded protein response (UPR) that prevents homodimerization of ERN1/IRE1 and subsequent activation of the protein. Interaction with HSPA5 also competitively inhibits ERN1 interaction with MANF. Interacts with PDIA6, a negative regulator of the UPR; the interaction is direct and disrupts homodimerization. Interacts with DAB2IP (via PH domain); the interaction occurs in a endoplasmic reticulum stress-induced dependent manner and is required for subsequent recruitment of TRAF2 to ERN1/IRE1. Interacts with TAOK3 and TRAF2. Interacts with RNF13. Interacts with LACC1. Interacts (when unphosphorylated) with DDRGK1; interaction is dependent on UFM1 and takes place in response to endoplasmic reticulum stress, regulating ERN1/IRE1-alpha stability. Interacts (via N-terminus) with P4HB/PDIA1; the interaction is enhanced by phosphorylation of P4HB by FAM20C in response to endoplasmic reticulum stress and results in attenuation of ERN1 activity. Interacts with TMBIM6; this interaction inhibits ERN1 activity. Interacts (via luminal domain) with MANF (via C-terminus); the interaction is decreased in the presence of increasing concentrations of Ca(2+). Mg(2+) serves as cofactor. In terms of processing, autophosphorylated following homodimerization. Autophosphorylation promotes activation of the endoribonuclease domain. In response to ER stress, phosphorylated at Ser-724, Ser-729 and possibly Ser-726; phosphorylation promotes oligomerization and endoribonuclease activity. Dephosphorylated at Ser-724, Ser-729 and possibly Ser-726 by RPAP2 to abort failed ER-stress adaptation and trigger apoptosis. Phosphorylated at Ser-724; in response to the ER stressor tunicamycin. ADP-ribosylated by PARP16 upon ER stress, which increases both kinase and endonuclease activities. Expressed in liver (at protein level). Ubiquitously expressed. High levels in thymus, liver and lung. In the brain, preferentially expressed in cortical, hippocampal and olfactory neurons.

The protein localises to the endoplasmic reticulum membrane. The enzyme catalyses L-seryl-[protein] + ATP = O-phospho-L-seryl-[protein] + ADP + H(+). It catalyses the reaction L-threonyl-[protein] + ATP = O-phospho-L-threonyl-[protein] + ADP + H(+). Its activity is regulated as follows. The kinase domain is activated by trans-autophosphorylation following homodimerization. Kinase activity is required for activation of the endoribonuclease domain. Endoribonuclease activity is specifically inhibited by hydroxy-aryl-aldehydes (HAA) MKC9989, OICR464 and OICR573. Serine/threonine-protein kinase and endoribonuclease that acts as a key sensor for the endoplasmic reticulum unfolded protein response (UPR). In unstressed cells, the endoplasmic reticulum luminal domain is maintained in its inactive monomeric state by binding to the endoplasmic reticulum chaperone HSPA5/BiP. Accumulation of misfolded protein in the endoplasmic reticulum causes release of HSPA5/BiP, allowing the luminal domain to homodimerize, promoting autophosphorylation of the kinase domain and subsequent activation of the endoribonuclease activity. The endoribonuclease activity is specific for XBP1 mRNA and excises 26 nucleotides from XBP1 mRNA. The resulting spliced transcript of XBP1 encodes a transcriptional activator protein that up-regulates expression of UPR target genes. Acts as an upstream signal for ER stress-induced GORASP2-mediated unconventional (ER/Golgi-independent) trafficking of CFTR to cell membrane by modulating the expression and localization of SEC16A. This Mus musculus (Mouse) protein is Serine/threonine-protein kinase/endoribonuclease IRE1.